The sequence spans 210 residues: Outer-membrane lipoprotein LolB (210 aa).

An N-terminal signal peptide occupies residues 1–18; that stretch reads MKKFTKILSLSTLLFLAG. A lipid anchor (N-palmitoyl cysteine) is attached at C19. C19 carries the S-diacylglycerol cysteine lipid modification.

The protein belongs to the LolB family. As to quaternary structure, monomer.

It is found in the cell outer membrane. In terms of biological role, plays a critical role in the incorporation of lipoproteins in the outer membrane after they are released by the LolA protein. This chain is Outer-membrane lipoprotein LolB, found in Actinobacillus pleuropneumoniae serotype 5b (strain L20).